The chain runs to 971 residues: Kinesin-like protein KIN-14C (971 aa).

Residues 14-119 form the Calponin-homology (CH) domain; that stretch reads ANRRAEVIDW…CLLALKDNVA (106 aa). Positions 272–357 form a coiled coil; that stretch reads IKALETLVNG…QMETKARQME (86 aa). Positions 472 to 799 constitute a Kinesin motor domain; it reads NIRVYCRVRP…LKFAERVSGV (328 aa). Residue 556-563 participates in ATP binding; the sequence is GQTGSGKT. Positions 809 to 844 form a coiled coil; it reads EGKDIKELLEQVASLKDTIARKDMEIEQLQLLKSKS. The segment covering 839–881 has biased composition (polar residues); that stretch reads LLKSKSPNSMTDRNGSNLLRQSTSSTGLSSLPVASQQNQQLSG. Residues 839 to 971 form a disordered region; sequence LLKSKSPNSM…GSLAKPSKRR (133 aa).

Belongs to the TRAFAC class myosin-kinesin ATPase superfamily. Kinesin family. KIN-14 subfamily.

The protein is Kinesin-like protein KIN-14C of Oryza sativa subsp. japonica (Rice).